A 444-amino-acid polypeptide reads, in one-letter code: tRNA (guanine-N(7)-)-methyltransferase non-catalytic subunit TRM82 (444 aa).

WD repeat units follow at residues 1–47, 48–99, 100–147, 148–192, 193–237, 238–279, and 308–354; these read MSVI…WSDD, FDKI…LGAP, PIYS…KRFC, FSKR…EPIL, GHVS…DKWL, FGHK…STFD, and FAVS…ITFP. A disordered region spans residues 55-92; that stretch reads RNTTAKEQQGQSSENENENKKLKSNKGDSIKRTAAKVP. Residues 71-85 are compositionally biased toward basic and acidic residues; it reads NENKKLKSNKGDSIK. At Ser-93 the chain carries Phosphoserine.

The protein belongs to the WD repeat TRM82 family. In terms of assembly, forms a heterodimer with the catalytic subunit TRM8.

It is found in the nucleus. It participates in tRNA modification; N(7)-methylguanine-tRNA biosynthesis. Its function is as follows. Required for the formation of N(7)-methylguanine at position 46 (m7G46) in tRNA, a modification required to maintain stability of tRNAs; its absence resulting in tRNA decay. In the complex, it is required to stabilize and induce conformational changes of the catalytic subunit. In Saccharomyces cerevisiae (strain RM11-1a) (Baker's yeast), this protein is tRNA (guanine-N(7)-)-methyltransferase non-catalytic subunit TRM82.